Here is a 567-residue protein sequence, read N- to C-terminus: Proline--tRNA ligase (567 aa).

It belongs to the class-II aminoacyl-tRNA synthetase family. ProS type 1 subfamily. Homodimer.

Its subcellular location is the cytoplasm. It catalyses the reaction tRNA(Pro) + L-proline + ATP = L-prolyl-tRNA(Pro) + AMP + diphosphate. Its function is as follows. Catalyzes the attachment of proline to tRNA(Pro) in a two-step reaction: proline is first activated by ATP to form Pro-AMP and then transferred to the acceptor end of tRNA(Pro). As ProRS can inadvertently accommodate and process non-cognate amino acids such as alanine and cysteine, to avoid such errors it has two additional distinct editing activities against alanine. One activity is designated as 'pretransfer' editing and involves the tRNA(Pro)-independent hydrolysis of activated Ala-AMP. The other activity is designated 'posttransfer' editing and involves deacylation of mischarged Ala-tRNA(Pro). The misacylated Cys-tRNA(Pro) is not edited by ProRS. This is Proline--tRNA ligase from Staphylococcus aureus (strain Mu3 / ATCC 700698).